The chain runs to 364 residues: WAT1-related protein At5g47470 (364 aa).

The next 10 helical transmembrane spans lie at 28–48 (MVIV…SLLM), 59–79 (FTIV…FAIL), 93–113 (LIGK…SLFL), 124–144 (ATAM…IVGL), 158–178 (ILGT…HSTS), 197–217 (VVGC…VVLQ), 228–248 (ISLS…VLLL), 255–275 (VLAS…LAGA), 293–313 (PVFV…FAVL), and 319–339 (VSLG…LVLW). The EamA 1 domain maps to 40–172 (VYAGNSLLMS…LCVFGALAMS (133 aa)). In terms of domain architecture, EamA 2 spans 219–338 (STLAEFPAPI…LMFVGLYLVL (120 aa)).

The protein belongs to the drug/metabolite transporter (DMT) superfamily. Plant drug/metabolite exporter (P-DME) (TC 2.A.7.4) family.

The protein localises to the membrane. The chain is WAT1-related protein At5g47470 from Arabidopsis thaliana (Mouse-ear cress).